The sequence spans 323 residues: CIMIP2 protein CG18335 (323 aa).

This sequence belongs to the CIMIP2 family.

The protein localises to the cytoplasm. It is found in the cytoskeleton. The protein resides in the cilium axoneme. Functionally, probable microtubule inner protein (MIP) part of the dynein-decorated doublet microtubules (DMTs) in cilium axoneme. This is CIMIP2 protein CG18335 from Drosophila melanogaster (Fruit fly).